Here is a 1305-residue protein sequence, read N- to C-terminus: MMLGLESLPDPMETWEIIETIGKGTYGKVYKVANKRDGSLAAVKVLDPVSDMDEEIEAEYNILQFLPSHPNVVKFYGMFYKADRCVGGQLWLVLELCNGGSVTELVKGLLRCGKRLDEAVISYILYGALLGLQHLHCHRIIHRDVKGNNILLTTEGGVKLVDFGVSAQLTSTRLRRNTSVGTPFWMAPEVIACEQQYDSSYDARCDVWSLGITAIELGDGDPPLFEMHPVKMLFKIPRNPPPTLLHPDSWCEEFNHFISQCLIKDFEKRPSVTHLLDHPFIKGTQGKVLCLQKQLAKVLQDQKHRNPVAKTRHERMHTGRPHRVEDAGKCCLEDDLVNLEVLDEDTIIYWLQKRYADALIYTYVGDILIALNPFQNLSIYSPQFSRLYHGVKRSSNPPHIFASADNAYQCLVTFSKDQCIVISGESGSGKTESAHLIVQHLTFLGKADNQTLRQKILQVNSLVEAFGNARTAINDNSSRFGKYLEMMFTPTGAVMGARISEYLLEKSRVIQQAAGEKNFHIFYYIYAGLYHQKKLAEFRLPEEKPPRYIAGETERVMQDITSKESYRTQFEAIQHCFKIIGFADKEVHSVYRILAGILNIGSIEFAAISSQHQTDKSEVPNPEALENAACVLCISSEELQEALTSHCVVTRGETIVRANTVDRAEDVRDAMSKALYGRLFSWIVNRINTLLQPDKNICSAEDRMNVGILDIFGFEDFQRNSFEQLCINIANEQIQYYFNQHVFALEQMEYKNEGVDAVLVQYEDNRPLLDMFLQKPLGLLALLDEESRFPQGTDQTLVDKFEDNLRCKFFWRPKGVELCFGIQHYAGPVLYDASGVLEKNRDTLPADVVVVLRTSENKLLQQLFSIPLTKTGNLAQTRAKITASSRSLPPHFSAGRAKVDTLEVIRHPEETTNMKRQTMASYFRYSLMDLLSKMVVGQPHFIRCIKPNDDRKALQFSQDRVLAQLRSTGILETVSIRRQGYSHRIFFEEFVKRYYYLAFRAHQTPPANKESCVAILEKSRLDHWVLGKTKVFLKYYHVEQLNLLLREVMGRVVMLQAYTKGWLGARRYKRAKEKREKGAITIQSAWRGYDARRKLKQRSRRRSESEAHIHTVLQTTPDQKYCPDSGGESNRGHEETSRNCPAEADTDGHPQAQSPPTGCDVTSGHADTAAGYTVAELSVAGTDVSPSLVYHTASAHQRLSPCEDSLKPGSEEGLSQKQRAPRRRCQQPKMLSSPEDTMYYNQLNGTLEYQGSQRKPRKLGQIKVLDGEDQYYKCLSPGACAPEETHSVHPFFFSSSPREDPFAQH.

The Protein kinase domain occupies 15–281; that stretch reads WEIIETIGKG…VTHLLDHPFI (267 aa). ATP-binding positions include 21 to 29 and K44; that span reads IGKGTYGKV. D144 serves as the catalytic Proton acceptor. A Myosin motor domain is found at 331–1046; the sequence is CLEDDLVNLE…HVEQLNLLLR (716 aa). The segment at 927 to 949 is actin-binding; that stretch reads LMDLLSKMVVGQPHFIRCIKPND. 2 IQ domains span residues 1048–1077 and 1075–1104; these read VMGR…KREK and REKG…RRSE. 2 disordered regions span residues 1093 to 1164 and 1200 to 1233; these read RKLK…VTSG and SPCE…MLSS.

This sequence in the C-terminal section; belongs to the TRAFAC class myosin-kinesin ATPase superfamily. Myosin family. It in the N-terminal section; belongs to the protein kinase superfamily. STE Ser/Thr protein kinase family. As to quaternary structure, interacts (via C-terminus) with ESPN. Interacts (via C-terminus) with ESPNL. In terms of tissue distribution, expressed in the cochlear hair cells (at protein level). Expressed in utricle hair bundles (at protein level).

The protein resides in the cytoplasm. The protein localises to the cytoskeleton. Its subcellular location is the cell projection. It is found in the stereocilium. It catalyses the reaction L-seryl-[protein] + ATP = O-phospho-L-seryl-[protein] + ADP + H(+). The enzyme catalyses L-threonyl-[protein] + ATP = O-phospho-L-threonyl-[protein] + ADP + H(+). Functionally, probable actin-based motor with a protein kinase activity. Required for normal cochlear hair bundle development and hearing. Plays an important role in the early steps of cochlear hair bundle morphogenesis. Influences the number and lengths of stereocilia to be produced and limits the growth of microvilli within the forming auditory hair bundles thereby contributing to the architecture of the hair bundle, including its staircase pattern. Involved in the elongation of actin in stereocilia tips by transporting the actin regulatory factor ESPN to the plus ends of actin filaments. This chain is Myosin-IIIb (Myo3b), found in Mus musculus (Mouse).